Consider the following 420-residue polypeptide: Serine/threonine-protein phosphatase 4 regulatory subunit 2-A (420 aa).

A disordered region spans residues 157–420; that stretch reads GNTSAFPDRN…ETADDNMEQD (264 aa). Residues 182–195 are compositionally biased toward polar residues; sequence SLSSNVATNGLPDS. Positions 196-210 are enriched in basic and acidic residues; it reads TESKEQASEQSERTV. A compositionally biased stretch (low complexity) spans 212 to 224; it reads ESSASEAESHSGA. The span at 229–250 shows a compositional bias: basic and acidic residues; sequence HRDDEDATHAETHEAKRLKFDK. Residues 251–266 show a composition bias toward acidic residues; that stretch reads EEEEEEDDEEEDEDGD. Over residues 267-276 the composition is skewed to basic and acidic residues; it reads EIKKELDEPH. The segment covering 278 to 296 has biased composition (polar residues); sequence PCTSVAESSSDVPQSSTDV. The segment covering 318–332 has biased composition (basic and acidic residues); sequence GVDRSTSEDSPDPSH. Residues 346 to 364 are compositionally biased toward acidic residues; it reads AEEEEEEESAEAQETEETN. Residues 368–394 are compositionally biased toward low complexity; that stretch reads SSSSNNSSDEGVSSAETPSASPSSSTE. Acidic residues predominate over residues 411–420; that stretch reads ETADDNMEQD.

The protein belongs to the PPP4R2 family. In terms of assembly, serine/threonine-protein phosphatase 4 (PP4) occurs in different assemblies of the catalytic and one or more regulatory subunits.

Functionally, regulatory subunit of serine/threonine-protein phosphatase 4 (PP4C). The sequence is that of Serine/threonine-protein phosphatase 4 regulatory subunit 2-A (ppp4r2a) from Danio rerio (Zebrafish).